The sequence spans 192 residues: MSKSSEKSVLKSERIILGIDPGTTIMGFGLIKVENKKMSFIQMNELQLSKYKDHYVKLKLIFERTIELIDNYHPDEIAIEAPFFGKNVQSMLKLGRAQGVAMAAGLSREVPITEYLPKKIKMAITGNGNASKEQVARMLQSQLNIGKLPKNLDATDGLAAAVCHFYNSGKTEIGKSYTGWDAFVKQNPKKIR.

Active-site residues include Asp20, Glu80, and Asp153. 3 residues coordinate Mg(2+): Asp20, Glu80, and Asp153.

The protein belongs to the RuvC family. As to quaternary structure, homodimer which binds Holliday junction (HJ) DNA. The HJ becomes 2-fold symmetrical on binding to RuvC with unstacked arms; it has a different conformation from HJ DNA in complex with RuvA. In the full resolvosome a probable DNA-RuvA(4)-RuvB(12)-RuvC(2) complex forms which resolves the HJ. The cofactor is Mg(2+).

It localises to the cytoplasm. It catalyses the reaction Endonucleolytic cleavage at a junction such as a reciprocal single-stranded crossover between two homologous DNA duplexes (Holliday junction).. In terms of biological role, the RuvA-RuvB-RuvC complex processes Holliday junction (HJ) DNA during genetic recombination and DNA repair. Endonuclease that resolves HJ intermediates. Cleaves cruciform DNA by making single-stranded nicks across the HJ at symmetrical positions within the homologous arms, yielding a 5'-phosphate and a 3'-hydroxyl group; requires a central core of homology in the junction. The consensus cleavage sequence is 5'-(A/T)TT(C/G)-3'. Cleavage occurs on the 3'-side of the TT dinucleotide at the point of strand exchange. HJ branch migration catalyzed by RuvA-RuvB allows RuvC to scan DNA until it finds its consensus sequence, where it cleaves and resolves the cruciform DNA. This is Crossover junction endodeoxyribonuclease RuvC from Christiangramia forsetii (strain DSM 17595 / CGMCC 1.15422 / KT0803) (Gramella forsetii).